Reading from the N-terminus, the 182-residue chain is Ribosome maturation factor RimM (182 aa).

The region spanning 99-176 is the PRC barrel domain; sequence DDEYYHADLI…ELPAEIEGDT (78 aa).

Belongs to the RimM family. As to quaternary structure, binds ribosomal protein uS19.

The protein resides in the cytoplasm. Functionally, an accessory protein needed during the final step in the assembly of 30S ribosomal subunit, possibly for assembly of the head region. Essential for efficient processing of 16S rRNA. May be needed both before and after RbfA during the maturation of 16S rRNA. It has affinity for free ribosomal 30S subunits but not for 70S ribosomes. The chain is Ribosome maturation factor RimM from Rhodopseudomonas palustris (strain HaA2).